The following is a 249-amino-acid chain: 2,3-bisphosphoglycerate-dependent phosphoglycerate mutase (249 aa).

Substrate contacts are provided by residues 9 to 16, 22 to 23, Arg61, 88 to 91, Lys99, 115 to 116, and 184 to 185; these read RHGQSQWN, TG, ERHY, RR, and GN. Catalysis depends on His10, which acts as the Tele-phosphohistidine intermediate. The active-site Proton donor/acceptor is the Glu88.

It belongs to the phosphoglycerate mutase family. BPG-dependent PGAM subfamily. Homodimer.

It catalyses the reaction (2R)-2-phosphoglycerate = (2R)-3-phosphoglycerate. It functions in the pathway carbohydrate degradation; glycolysis; pyruvate from D-glyceraldehyde 3-phosphate: step 3/5. In terms of biological role, catalyzes the interconversion of 2-phosphoglycerate and 3-phosphoglycerate. The protein is 2,3-bisphosphoglycerate-dependent phosphoglycerate mutase of Xanthomonas euvesicatoria pv. vesicatoria (strain 85-10) (Xanthomonas campestris pv. vesicatoria).